Reading from the N-terminus, the 737-residue chain is ATP-dependent RNA helicase DDX50 (737 aa).

The interval 1-131 is disordered; the sequence is MPGKLLWGDI…SDNKLEETLT (131 aa). Over residues 11–20 the composition is skewed to acidic residues; the sequence is MELEAPLEES. 3 stretches are compositionally biased toward basic and acidic residues: residues 38–51, 67–87, and 117–131; these read HYDSDEKSETRENG, KEKLNGDTEEGFNRLSDEFSK, and STHKSSDNKLEETLT. 5 positions are modified to phosphoserine: serine 41, serine 82, serine 86, serine 121, and serine 122. Lysine 125 participates in a covalent cross-link: Glycyl lysine isopeptide (Lys-Gly) (interchain with G-Cter in SUMO2). The Q motif motif lies at 137–165; sequence GAFSNFPISEETIKLLKGRGVTYLFPIQV. The region spanning 168-347 is the Helicase ATP-binding domain; the sequence is FGPVYEGKDL…KKYMKSRYEQ (180 aa). Residue 181-188 participates in ATP binding; it reads ARTGTGKT. Position 247 is a phosphothreonine (threonine 247). The DEVD box signature appears at 290–293; the sequence is DEVD. Residues 380 to 524 form the Helicase C-terminal domain; the sequence is DVLQVYSGSE…GVPSTMDLVK (145 aa). A Phosphoserine modification is found at serine 518. A disordered region spans residues 668-737; sequence YDGNTSSNSR…RSGGHKRSFD (70 aa). Residues 673–687 show a composition bias toward low complexity; that stretch reads SSNSRQRSGWSSGRS. Residues 691-701 show a composition bias toward gly residues; that stretch reads GRSGGRSGGRS. Residues 702-712 are compositionally biased toward low complexity; sequence GRQSRQGSRSG. The span at 720–737 shows a compositional bias: basic residues; that stretch reads RSGNRNRSRSGGHKRSFD.

This sequence belongs to the DEAD box helicase family. DDX21/DDX50 subfamily. As to quaternary structure, interacts with C1QBP. Interacts with the ubiquitin ligase CTLH complex through GID4. Interacts with TICAM1. Highest expression in skeletal muscle, liver, heart, placenta, and kidney.

It is found in the nucleus. The protein localises to the nucleolus. The protein resides in the cytoplasm. The enzyme catalyses ATP + H2O = ADP + phosphate + H(+). Functionally, ATP-dependent RNA helicase that may play a role in various aspects of RNA metabolism including pre-mRNA splicing or ribosomal RNA production. Also acts as a viral restriction factor and promotes the activation of the NF-kappa-B and IRF3 signaling pathways following its stimulation with viral RNA or infection with RNA and DNA viruses. For instance, decreases vaccinia virus, herpes simplex virus, Zika virus or dengue virus replication during the early stage of infection. Mechanistically, acts via the adapter TICAM1 and independently of the DDX1-DDX21-DHX36 helicase complex to induce the production of interferon-beta. In Homo sapiens (Human), this protein is ATP-dependent RNA helicase DDX50 (DDX50).